The sequence spans 502 residues: Uric acid degradation bifunctional protein (502 aa).

The tract at residues 1–178 (MMRLKQLNEM…NSMTKHKERV (178 aa)) is OHCU decarboxylase. Histidine 68 serves as the catalytic Proton donor; for OHCU decarboxylase activity. 5-hydroxy-2-oxo-4-ureido-2,5-dihydro-1H-imidazole-5-carboxylate-binding positions include proline 69, 81-85 (SQEEQ), and 116-120 (FVMAV). The segment at 179–502 (MYYGKGDVFA…DEPDHKGALK (324 aa)) is urate oxidase. Lysine 183 (charge relay system; for urate oxidase activity) is an active-site residue. The Charge relay system role is filled by lysine 194. Threonine 243 serves as the catalytic Charge relay system; for urate oxidase activity. Urate is bound by residues threonine 243, aspartate 244, phenylalanine 354, arginine 371, isoleucine 419, glutamine 420, and asparagine 446.

The protein in the N-terminal section; belongs to the OHCU decarboxylase family. In the C-terminal section; belongs to the uricase family.

It carries out the reaction 5-hydroxy-2-oxo-4-ureido-2,5-dihydro-1H-imidazole-5-carboxylate + H(+) = (S)-allantoin + CO2. The enzyme catalyses urate + O2 + H2O = 5-hydroxyisourate + H2O2. The protein operates within purine metabolism; urate degradation; (S)-allantoin from urate: step 1/3. It functions in the pathway purine metabolism; urate degradation; (S)-allantoin from urate: step 3/3. Catalyzes two steps in the degradation of uric acid, i.e. the oxidation of uric acid to 5-hydroxyisourate (HIU) and the stereoselective decarboxylation of 2-oxo-4-hydroxy-4-carboxy-5-ureidoimidazoline (OHCU) to (S)-allantoin. The sequence is that of Uric acid degradation bifunctional protein (uao) from Bacillus sp. (strain TB-90).